The chain runs to 230 residues: Demethylmenaquinone methyltransferase (230 aa).

S-adenosyl-L-methionine-binding positions include Thr-62, Asp-80, 100-101, and Ser-117; that span reads DA.

It belongs to the class I-like SAM-binding methyltransferase superfamily. MenG/UbiE family.

The enzyme catalyses a 2-demethylmenaquinol + S-adenosyl-L-methionine = a menaquinol + S-adenosyl-L-homocysteine + H(+). It participates in quinol/quinone metabolism; menaquinone biosynthesis; menaquinol from 1,4-dihydroxy-2-naphthoate: step 2/2. Functionally, methyltransferase required for the conversion of demethylmenaquinol (DMKH2) to menaquinol (MKH2). This Mycolicibacterium paratuberculosis (strain ATCC BAA-968 / K-10) (Mycobacterium paratuberculosis) protein is Demethylmenaquinone methyltransferase.